Reading from the N-terminus, the 481-residue chain is Aspartyl/glutamyl-tRNA(Asn/Gln) amidotransferase subunit B (481 aa).

The protein belongs to the GatB/GatE family. GatB subfamily. In terms of assembly, heterotrimer of A, B and C subunits.

The enzyme catalyses L-glutamyl-tRNA(Gln) + L-glutamine + ATP + H2O = L-glutaminyl-tRNA(Gln) + L-glutamate + ADP + phosphate + H(+). It catalyses the reaction L-aspartyl-tRNA(Asn) + L-glutamine + ATP + H2O = L-asparaginyl-tRNA(Asn) + L-glutamate + ADP + phosphate + 2 H(+). Allows the formation of correctly charged Asn-tRNA(Asn) or Gln-tRNA(Gln) through the transamidation of misacylated Asp-tRNA(Asn) or Glu-tRNA(Gln) in organisms which lack either or both of asparaginyl-tRNA or glutaminyl-tRNA synthetases. The reaction takes place in the presence of glutamine and ATP through an activated phospho-Asp-tRNA(Asn) or phospho-Glu-tRNA(Gln). The polypeptide is Aspartyl/glutamyl-tRNA(Asn/Gln) amidotransferase subunit B (Ectopseudomonas mendocina (strain ymp) (Pseudomonas mendocina)).